The chain runs to 212 residues: Ras-related protein Rab-43 (212 aa).

25-32 contacts GTP; sequence GDASVGKT. Positions 47–55 match the Effector region motif; it reads QGSTIGVDF. Phosphoserine is present on serine 49. GTP is bound at residue 73–77; that stretch reads DTAGQ. At threonine 82 the chain carries Phosphothreonine; by LRRK2. GTP contacts are provided by residues 131–134 and 163–164; these read NKSD and AK. Serine 193 is modified (phosphoserine). 2 S-geranylgeranyl cysteine lipidation sites follow: cysteine 210 and cysteine 212. Cysteine 212 carries the post-translational modification Cysteine methyl ester.

Belongs to the small GTPase superfamily. Rab family. Interacts with GDI1, GDI2, CHM and CHML; phosphorylation at Thr-82 disrupts these interactions. In terms of tissue distribution, widely expressed in brain, testis, lung, heart, ovary, colon, kidney, uterus and spleen but not in liver.

The protein resides in the cytoplasmic vesicle. It localises to the phagosome. The protein localises to the phagosome membrane. It is found in the golgi apparatus. Its subcellular location is the trans-Golgi network membrane. The protein resides in the trans-Golgi network. Its function is as follows. The small GTPases Rab are key regulators of intracellular membrane trafficking, from the formation of transport vesicles to their fusion with membranes. Rabs cycle between an inactive GDP-bound form and an active GTP-bound form that is able to recruit to membranes different set of downstream effectors directly responsible for vesicle formation, movement, tethering and fusion. The low intrinsic GTPase activity of RAB43 is activated by USP6NL. Involved in retrograde transport from the endocytic pathway to the Golgi apparatus. Involved in the transport of Shiga toxin from early and recycling endosomes to the trans-Golgi network. Required for the structural integrity of the Golgi complex. Plays a role in the maturation of phagosomes that engulf pathogens, such as S.aureus and M.tuberculosis. The polypeptide is Ras-related protein Rab-43 (RAB43) (Homo sapiens (Human)).